The chain runs to 128 residues: MLQLVFRYQAIYLIFAGFTVFGLLLHFYSRKKKWIKINTQFADLITHNRMPSYCNLDRLMMTFEHFSIQQIAEQLNLSLPILLNELSQAQINITDSHRTLRENFPLNDEKIFAAITIALKVRFNPTLL.

A helical transmembrane segment spans residues 8–28 (YQAIYLIFAGFTVFGLLLHFY).

It is found in the membrane. This is an uncharacterized protein from Haemophilus influenzae (strain ATCC 51907 / DSM 11121 / KW20 / Rd).